The chain runs to 285 residues: UPF0354 protein MW1686 (285 aa).

This sequence belongs to the UPF0354 family.

This Staphylococcus aureus (strain MW2) protein is UPF0354 protein MW1686.